Reading from the N-terminus, the 97-residue chain is Co-chaperonin GroES (97 aa).

Belongs to the GroES chaperonin family. In terms of assembly, heptamer of 7 subunits arranged in a ring. Interacts with the chaperonin GroEL.

The protein localises to the cytoplasm. Together with the chaperonin GroEL, plays an essential role in assisting protein folding. The GroEL-GroES system forms a nano-cage that allows encapsulation of the non-native substrate proteins and provides a physical environment optimized to promote and accelerate protein folding. GroES binds to the apical surface of the GroEL ring, thereby capping the opening of the GroEL channel. In Pseudomonas aeruginosa (strain LESB58), this protein is Co-chaperonin GroES.